A 235-amino-acid polypeptide reads, in one-letter code: Phosphoribosylaminoimidazole-succinocarboxamide synthase (235 aa).

Belongs to the SAICAR synthetase family.

The catalysed reaction is 5-amino-1-(5-phospho-D-ribosyl)imidazole-4-carboxylate + L-aspartate + ATP = (2S)-2-[5-amino-1-(5-phospho-beta-D-ribosyl)imidazole-4-carboxamido]succinate + ADP + phosphate + 2 H(+). The protein operates within purine metabolism; IMP biosynthesis via de novo pathway; 5-amino-1-(5-phospho-D-ribosyl)imidazole-4-carboxamide from 5-amino-1-(5-phospho-D-ribosyl)imidazole-4-carboxylate: step 1/2. This is Phosphoribosylaminoimidazole-succinocarboxamide synthase from Streptococcus mutans serotype c (strain ATCC 700610 / UA159).